Reading from the N-terminus, the 1388-residue chain is MSRPPPTGKMPGAPEAVSGDGAGASRQRKLEALIRDPRSPINVESLLDGLNSLVLDLDFPALRKNKNIDNFLNRYEKIVKKIRGLQMKAEDYDVVKVIGRGAFGEVQLVRHKASQKVYAMKLLSKFEMIKRSDSAFFWEERDIMAFANSPWVVQLFCAFQDDKYLYMVMEYMPGGDLVNLMSNYDVPEKWAKFYTAEVVLALDAIHSMGLIHRDVKPDNMLLDKHGHLKLADFGTCMKMDETGMVHCDTAVGTPDYISPEVLKSQGGDGYYGRECDWWSVGVFLFEMLVGDTPFYADSLVGTYSKIMDHKNSLCFPEDAEISKHAKNLICAFLTDREVRLGRNGVEEIKQHPFFKNDQWNWDNIRETAAPVVPELSSDIDSSNFDDIEDDKGDVETFPIPKAFVGNQLPFIGFTYYRENLLLSDSPSCKENDSIQIRKNEESQEIQKKLYTLEEHLSTEIQAKEELEQKCKSVNTRLEKVAKELEEEIALRKNVESALRQLEREKALLQHKNAEYQRKADHEADKKRNLENDVNSLKDQLEDLKKRNQNSQISTEKVNQLQRQLDETNALLRTESDTAARLRKTQAESSKQIQQLESNNRDLQDKNCLLETAKLKLEKDFINLQSVLESERRDRTHGSEIINDLQGRISGLEEDLKNGKILLTKVEMEKRQLQERFTDLEKEKNNMEIDMTYQLKVIQQSLEQEEAEHKATKARLADKNKIYESIEEAKSEAMKEMEKKLLEERTLKQKVENLLLEAEKRCSILDCDLKQSQQKINELLKQKDVLNEDVRNLTLKIEQETQKRCLTQNDLKMQTQQVNTLKMSEKQLKQENNHLMEMKMSLEKQNAELRKERQDADGQMKELQDQLEAEQYFSTLYKTQVRELKEECEEKTKLCKELQQKKQELQDERDSLAAQLEITLTKADSEQLARSIAEEQYSDLEKEKIMKELEIKEMMARHKQELTEKDTTIASLEETNRTLTSDVANLANEKEELNNKLKDAQEQLSRLKDEEISAAAIKAQFEKQLLTERTLKTQAVNKLAEIMNRKEPVKRGNDTDMRRKEKENRKLHMELKSEREKLTQQMIKYQKELNEMQAQIAEESQIRIELQMTLDSKDSDIEQLRSQLQALHIGLDSSSIGSGPGDAEADDGFPESRLEGWLSLPVRNNTKKFGWVKKYVIVSSKKILFYDSEQDKEQSNPYMVLDIDKLFHVRPVTQTDVYRADAKEIPRIFQILYANEGESKKEQEFPVEPVGEKSNCICHKGHEFIPTLYHFPTNCEACMKPLWHMFKPPPALECRRCHIKCHKDHMDKKEEIIAPCKVYYDISSAKNLLLLANSTEEQQKWVSRLVKKIPKKPPAPDPFARSSPRTSMKIQQNQSIRRPSRQLAANKPS.

The disordered stretch occupies residues 1-24; the sequence is MSRPPPTGKMPGAPEAVSGDGAGA. The Protein kinase domain maps to 92-354; it reads YDVVKVIGRG…VEEIKQHPFF (263 aa). Residues 98–106 and K121 contribute to the ATP site; that span reads IGRGAFGEV. The active-site Proton acceptor is the D214. In terms of domain architecture, AGC-kinase C-terminal spans 357-425; the sequence is DQWNWDNIRE…YRENLLLSDS (69 aa). The interval 363–784 is interaction with PPP1R12A; the sequence is NIRETAAPVV…INELLKQKDV (422 aa). The tract at residues 373-420 is interaction with NPM1; that stretch reads PELSSDIDSSNFDDIEDDKGDVETFPIPKAFVGNQLPFIGFTYYRENL. T414 is subject to Phosphothreonine; by ROCK2. An REM-1 domain is found at 497-573; the sequence is ALRQLEREKA…LDETNALLRT (77 aa). Basic and acidic residues predominate over residues 512 to 530; it reads NAEYQRKADHEADKKRNLE. Residues 512-532 form a disordered region; that stretch reads NAEYQRKADHEADKKRNLEND. Y722 carries the post-translational modification Phosphotyrosine; by SRC. The region spanning 979-1047 is the RhoBD domain; that stretch reads TSDVANLANE…LAEIMNRKEP (69 aa). The RHOA binding stretch occupies residues 979 to 1047; sequence TSDVANLANE…LAEIMNRKEP (69 aa). The stretch at 1054–1126 forms a coiled coil; it reads TDMRRKEKEN…EQLRSQLQAL (73 aa). S1137 is subject to Phosphoserine. A PH domain is found at 1150–1349; it reads ESRLEGWLSL…WVSRLVKKIP (200 aa). T1212 bears the Phosphothreonine mark. The segment at 1260–1315 adopts a Phorbol-ester/DAG-type zinc-finger fold; sequence GHEFIPTLYHFPTNCEACMKPLWHMFKPPPALECRRCHIKCHKDHMDKKEEIIAPC. Residues 1345 to 1388 form a disordered region; sequence VKKIPKKPPAPDPFARSSPRTSMKIQQNQSIRRPSRQLAANKPS. Phosphoserine is present on residues S1362 and S1374. Residues 1362-1376 show a composition bias toward polar residues; it reads SPRTSMKIQQNQSIR.

This sequence belongs to the protein kinase superfamily. AGC Ser/Thr protein kinase family. Homodimer. Interacts with IRS1. Interacts with RAF1. Interacts with RHOA (activated by GTP), RHOB and RHOC. Interacts with PPP1R12A. Interacts with EP300. Interacts with CHORDC1. Interacts with BRCA2. Interacts with NPM1; this interaction enhances ROCK2 activity. Interacts with SORL1. Interacts with PJVK. Requires Mg(2+) as cofactor. In terms of processing, autophosphorylated. Phosphorylation at Tyr-722 reduces its binding to RHOA and is crucial for focal adhesion dynamics. Dephosphorylation by PTPN11 stimulates its RHOA binding activity. Cleaved by granzyme B during apoptosis. This leads to constitutive activation of the kinase and membrane blebbing.

It is found in the cytoplasm. The protein localises to the cell membrane. It localises to the nucleus. Its subcellular location is the cytoskeleton. The protein resides in the microtubule organizing center. It is found in the centrosome. The enzyme catalyses L-seryl-[protein] + ATP = O-phospho-L-seryl-[protein] + ADP + H(+). The catalysed reaction is L-threonyl-[protein] + ATP = O-phospho-L-threonyl-[protein] + ADP + H(+). With respect to regulation, activated by RHOA binding. Inhibited by Y-27632. Its function is as follows. Protein kinase which is a key regulator of actin cytoskeleton and cell polarity. Involved in regulation of smooth muscle contraction, actin cytoskeleton organization, stress fiber and focal adhesion formation, neurite retraction, cell adhesion and motility via phosphorylation of ADD1, BRCA2, CNN1, EZR, DPYSL2, EP300, MSN, MYL9/MLC2, NPM1, RDX, PPP1R12A and VIM. Phosphorylates SORL1 and IRF4. Acts as a negative regulator of VEGF-induced angiogenic endothelial cell activation. Positively regulates the activation of p42/MAPK1-p44/MAPK3 and of p90RSK/RPS6KA1 during myogenic differentiation. Plays an important role in the timely initiation of centrosome duplication. Inhibits keratinocyte terminal differentiation. May regulate closure of the eyelids and ventral body wall through organization of actomyosin bundles. Plays a critical role in the regulation of spine and synaptic properties in the hippocampus. Plays an important role in generating the circadian rhythm of the aortic myofilament Ca(2+) sensitivity and vascular contractility by modulating the myosin light chain phosphorylation. The polypeptide is Rho-associated protein kinase 2 (ROCK2) (Sus scrofa (Pig)).